The primary structure comprises 84 residues: Small ribosomal subunit protein uS17 (84 aa).

Belongs to the universal ribosomal protein uS17 family. As to quaternary structure, part of the 30S ribosomal subunit.

Functionally, one of the primary rRNA binding proteins, it binds specifically to the 5'-end of 16S ribosomal RNA. The chain is Small ribosomal subunit protein uS17 from Borrelia duttonii (strain Ly).